The primary structure comprises 145 residues: uncharacterized protein (145 aa).

The protein belongs to the methyltransferase superfamily.

Probable methyltransferase. This is an uncharacterized protein from Schizosaccharomyces pombe (strain 972 / ATCC 24843) (Fission yeast).